The primary structure comprises 341 residues: MDLKSKFMEVYYKLKSELLNDPAFEFTDDSRQWVEQMLDYNVPGGKLNRGLSVIDSYQILKGGKELTEEEIFLTSALGWCIEWLQAYFLVLDDIMDNSVTRRGQPCWFRVPKVGLIAANDGILLRNHIPRILKKHFKGKSYYVDLLDLFNEVEFQTASGQMIDLITTIEGEKDLSKYSIPLHHRIVQYKTAYYSFYLPVACALVMAGENLDNHVDVKNILIEMGTYFQVQDDYLDCFGHPDVIGKIGTDIEDFKCSWLVVKALEIVTDEQKKLLFEHYGKADEASVKKVKELYKTLDLEGVFADYESTSYQKLNKSIEAHPKKEVQAVLKSFLAKIYKRQK.

Isopentenyl diphosphate contacts are provided by Lys46, Arg49, and Gln85. Mg(2+)-binding residues include Asp92 and Asp96. Residue Arg101 coordinates dimethylallyl diphosphate. Residue Arg102 coordinates isopentenyl diphosphate. The dimethylallyl diphosphate site is built by Lys189, Thr190, Gln228, Lys245, and Lys254.

Belongs to the FPP/GGPP synthase family. It depends on Mg(2+) as a cofactor. In terms of tissue distribution, mainly expressed in trichomes, roots and flowers, and, to a lower extent, in leaves and stems.

It localises to the cytoplasm. It is found in the nucleus. The enzyme catalyses isopentenyl diphosphate + dimethylallyl diphosphate = (2E)-geranyl diphosphate + diphosphate. The catalysed reaction is isopentenyl diphosphate + (2E)-geranyl diphosphate = (2E,6E)-farnesyl diphosphate + diphosphate. Its pathway is isoprenoid biosynthesis; farnesyl diphosphate biosynthesis; farnesyl diphosphate from geranyl diphosphate and isopentenyl diphosphate: step 1/1. It functions in the pathway sesquiterpene biosynthesis. It participates in isoprenoid biosynthesis; geranyl diphosphate biosynthesis; geranyl diphosphate from dimethylallyl diphosphate and isopentenyl diphosphate: step 1/1. Its function is as follows. Catalyzes the sequential condensation of isopentenyl pyrophosphate with the allylic pyrophosphates, dimethylallyl pyrophosphate, and then with the resultant geranylpyrophosphate to the ultimate product farnesyl pyrophosphate. The polypeptide is Farnesyl pyrophosphate synthase 2 (Cannabis sativa (Hemp)).